Reading from the N-terminus, the 3010-residue chain is MSTNGKPQRKTKRNTNRRPQDVKFPGGGQIVGGVYLLPRRGPRLGVRATRKTWERSQPRGRRQPIPKARQPEGRAWAQPGYPWPLYGNEGLGWAGWLVSPRGSRPNWGPTDPRRRSRNLGKVIDTLTCGFADLMGYIPLVGAPLGGVARALAHGVRVLEDGVNYATGNLPGCSFSIFLLALLSCLTIPASAYEVHNVSGIYHVTNDCSNSSIVYEAADMIMHTPGCVPCVRENNSSRCWVALTPTLAARNNSVPTATIRRHVDLLVGAAAFCSAMYVGDLCGSVFLVSQLFTFSPRRYETVQDCNCSIYPGHVTGHRMAWDMMMNWSPTTALVVSQLLRIPQAVVDMVGGAHWGVLAGLAYYSMVGNWAKVLIVMLLFAGVDGSTIVSGGTVARTTHSLASLFTQGASQKIQLINTNGSWHINRTALNCNDSLQTGFLASLFYAHRFNASGCPERMASCRSIDKFDQGWGPITYTEADIQDQRPYCWHYAPRPCGIVPASQVCGPVYCFTPSPVVVGTTDRFGAPTYSWGENETDVLILNNTRPPQGNWFGCTWMNSTGFTKTCGGPPCNIGGGGNNTLVCPTDCFRKHPEATYTKCGSGPWLTPRCMVDYPYRLWHYPCTVNFTIFKVRMYVGGVEHRLNAACNWTRGERCDLEDRDRSELSPLLLSTTEWQILPCSFTGLPALSTGLIHLHQNVVDVQYLYGIGSAVVSFAIKWEYILLLFLLLADARVCACLWMMLLIAQAEAALENLVVFNAASVAGMHGTLSFLVFFCAAWYIKGRLVPGAAYALYGVWPLLLLLLALPPRAYAMDREMAASCGGAVFVGLVLLTLSPHYKMFLARLIWWLQYFITRAEAHLQVWIPPLNVRGGRDAIILLTCAAYPELIFDITKILLAILGPLMVLQAGLTRIPYFVRAQGLIRACMLVRKAAGGHYVQMALMKLAALTGTYVYDHLTPLQDWAHTGLRDLAVAVEPVVFSDMETKIITWGADTAACGDIILGLPVSARRGREILLGPADSLEGRGWRLLAPITAYAQQTRGLFGCIITSLTGRDKNQVEGEVQVVSTATQSFLATCINGVCWTVYHGAGSKTLAGPKGPITQMYTNVDQDLVGWHAPQGARSLTPCTCGSSDLYLVTRHADVIPVRRRGDSRGSLLSPRPISYLKGSSGGPLLCPSGHVVGIFRAAVCTRGVAKAVDFVPVESMETTMRSPVFTDNSSPPAVPQAFQVAHLHAPTGSGKSTKVPAAYAAQGYKVLVLNPSVAATLGFGAYMSKAHGVDPNIRTGVRTITTGAPITYSTYGKFLADGGCSGGAYDIIMCDECHSTDSTTILGIGTVLDQAETAGARLVVLATATPPGSVTVPHPNIEEIALSNTGEIPFYGKAIPIETIKGGRHLIFCHSKKKCDELAAKLSALGIHAVAYYRGLDVSVIPASGNVVVVATDALMTGFTGDFDSVIDCNTCVTQTVDFSLDPTFTIETTTMPQDAVSRSQRRGRTSRGRRGIYRFVTPGERPSGMFDSSVLCECYDAGCAWYELTPAETSVRLRAYLNTPGLPVCQDHLEFWESVFTGLTHIDAHFLSQTKQAGDNFPYLVAYQATVCARAQAPPPSWDQMWKCLTRLKPTLHGPTPLLYRLGAVQNEVTLTHPITKYIMACMSADLEVVTSTWVLVGGVLAALAAYCLTTGSVVIVGRIILSGKPAVVPDREVLYQEFDEMEECASHLPYIEQGMQLAEQFKQKALGLLQTATKQAEAAAPVVESKWRTLEAFWANDMWNFISGIQYLAGLSTLPGNPAIASLMAFTASITSPLTTQSTLLFNILGGWVAAQLAPPGAASAFVGAGIAGAAVGSIGLGKVLVDMVAGYGAGVAGALVAFKVMSGEMPSTEDLVNLLPAILSPGALVVGVVCAAILRRHVDPGEGAVQWMNRLIAFASRGNHVSPTHYVPESDAAARVTQILSGLTITQLLRRLHQWINEDCSTPCSGSWLRDVWDWICTVLADFKTWLQSKLLPRLPGVPFFSCQRGYKGVWRGDGIMQTTCPCGAQLTGHVKNGSMRIWGPKTCSNTWHGTFPINAYTTGPCTPSPAPNYSRALWRVAAEEYVEVRRVGDFHYVTGMTTDNVKCPCQVPAPEFFTEVDGVRLHRYAPACKPLLREEVSFQVGLNQYVVGSQLPCEPEPDVAVLTSMLTDPSHITAETAKRRLARGSPPSLASSSASQLSALSLKAACTTRHTPPDADLIEANLLWRQEMGGNITRVESENKVVILDSFDPLRAEEDEREVSVPAEILRKSRKFPPALPVWARPDYNPPLLEPWKDPDYVPPVVHGCPLPPVKAPPIPPPRRKRTVVLTESTVSSALAELATKTFGSSESSAAGSGTATAPPDQPSDDGDAGSDVESCSSMPPLEGEPGDPDLSDGSWSTVSEEDGEGVICCSMSYTWTGALITPCAAEESKLPINALSNSLLRHHNMVYATTSRSASQRQKKVTIDRLQVLDDHYRDVLKEMKAKASTVKAKLLSVEEACKLTPPHSARSKFGYGAKDVRNLSGKAINHIRSVWKDLLEDTETPIDTTIMAKNEVFCVQPEKGGRKPARLIVFPDLGVRVCEKMALYDVVSTLPQAVMGSSYGFQYSPGQRVEFLVNAWKSKKCPMGFSYDTRCFDSTVTESDIRVEESIYQCCDLAPEARQAIRSLTERLYIGGPLTNSKGQNCGYRRCRASGVLTTSCGNTLTCYLKASAACRAAKLQDCTMLVCGDDLVVICESAGTQEDAASLRVFTEAMTRYSAPPGDLPQPEYDQELITSCSSNVSVAHDASGKRVYYLTRDPTTPLARAAWATARHTPVNSWLGNIIMYAPTLWARMILMTHFFSILLAQEQLEKALDCQIYGACYSIEPLDLPQIIERLHGLSAFSLHSYSPGEINRVASCLRKLGVPPLRAWRHRARSVRAKLLSQGGRAATCGRYLFNWAVKTKLKLTPIPAASQLDLSKWFVAGYGGGDIYHSLSRARPRWFMLCLLLLSVGVGIYLLPNR.

An N-acetylserine; by host modification is found at serine 2. An interaction with STAT1 region spans residues 2–23 (STNGKPQRKTKRNTNRRPQDVK). The interval 2–58 (STNGKPQRKTKRNTNRRPQDVKFPGGGQIVGGVYLLPRRGPRLGVRATRKTWERSQP) is interaction with EIF2AK2/PKR. The interval 2 to 59 (STNGKPQRKTKRNTNRRPQDVKFPGGGQIVGGVYLLPRRGPRLGVRATRKTWERSQPR) is interaction with DDX3X. The disordered stretch occupies residues 2–75 (STNGKPQRKT…PKARQPEGRA (74 aa)). Topologically, residues 2–168 (STNGKPQRKT…EDGVNYATGN (167 aa)) are cytoplasmic. 4 short sequence motifs (nuclear localization signal) span residues 5 to 13 (GKPQRKTKR), 38 to 43 (PRRGPR), 58 to 64 (PRGRRQP), and 66 to 71 (PKARQP). The span at 7 to 16 (PQRKTKRNTN) shows a compositional bias: basic residues. Serine 99 carries the post-translational modification Phosphoserine; by host. The tract at residues 112-152 (PRRRSRNLGKVIDTLTCGFADLMGYIPLVGAPLGGVARALA) is important for endoplasmic reticulum and mitochondrial localization. At serine 116 the chain carries Phosphoserine; by host PKA. The interaction with APOA2 stretch occupies residues 122 to 173 (VIDTLTCGFADLMGYIPLVGAPLGGVARALAHGVRVLEDGVNYATGNLPGCS). The interval 164 to 167 (YATG) is important for lipid droplets localization. The chain crosses the membrane as a helical span at residues 169 to 189 (LPGCSFSIFLLALLSCLTIPA). The propeptide at 178–191 (LLALLSCLTIPASA) is ER anchor for the core protein, removed in mature form by host signal peptidase. At 190 to 358 (SAYEVHNVSG…GGAHWGVLAG (169 aa)) the chain is on the lumenal side. 4 N-linked (GlcNAc...) asparagine; by host glycosylation sites follow: asparagine 196, asparagine 209, asparagine 234, and asparagine 250. The important for fusion stretch occupies residues 265 to 296 (LVGAAAFCSAMYVGDLCGSVFLVSQLFTFSPR). An N-linked (GlcNAc...) asparagine; by host glycan is attached at asparagine 305. A helical membrane pass occupies residues 359–379 (LAYYSMVGNWAKVLIVMLLFA). The Lumenal portion of the chain corresponds to 380-725 (GVDGSTIVSG…WEYILLLFLL (346 aa)). An HVR1 region spans residues 385 to 411 (TIVSGGTVARTTHSLASLFTQGASQKI). 4 N-linked (GlcNAc...) (high mannose) asparagine; by host glycosylation sites follow: asparagine 417, asparagine 423, asparagine 430, and asparagine 448. Cystine bridges form between cysteine 429/cysteine 552, cysteine 452/cysteine 459, cysteine 486/cysteine 494, and cysteine 503/cysteine 508. Positions 474–479 (YTEADI) are HVR2. Residues 480-493 (QDQRPYCWHYAPRP) are CD81-binding 1. Asparagine 532 carries an N-linked (GlcNAc...) (high mannose) asparagine; by host glycan. Asparagine 540 carries N-linked (GlcNAc...) asparagine; by host glycosylation. The tract at residues 544–551 (PPQGNWFG) is CD81-binding 2. N-linked (GlcNAc...) (high mannose) asparagine; by host glycosylation occurs at asparagine 556. Cysteine 564 and cysteine 569 are joined by a disulfide. An N-linked (GlcNAc...) (high mannose) asparagine; by host glycan is attached at asparagine 576. Intrachain disulfides connect cysteine 581–cysteine 585, cysteine 597–cysteine 620, and cysteine 607–cysteine 644. Residues asparagine 623 and asparagine 645 are each glycosylated (N-linked (GlcNAc...) (high mannose) asparagine; by host). The cysteines at positions 652 and 677 are disulfide-linked. The segment at 660-671 (SELSPLLLSTTE) is PKR/eIF2-alpha phosphorylation homology domain (PePHD). Residues 726–746 (LADARVCACLWMMLLIAQAEA) form a helical membrane-spanning segment. At 747 to 757 (ALENLVVFNAA) the chain is on the lumenal side. Residues 758–778 (SVAGMHGTLSFLVFFCAAWYI) form a helical membrane-spanning segment. Residues 779–781 (KGR) are Cytoplasmic-facing. The helical transmembrane segment at 782–803 (LVPGAAYALYGVWPLLLLLLAL) threads the bilayer. Over 804–813 (PPRAYAMDRE) the chain is Lumenal. A helical membrane pass occupies residues 814–834 (MAASCGGAVFVGLVLLTLSPH). Over 835-838 (YKMF) the chain is Cytoplasmic. A helical transmembrane segment spans residues 839–859 (LARLIWWLQYFITRAEAHLQV). Residues 860–881 (WIPPLNVRGGRDAIILLTCAAY) are Lumenal-facing. A helical transmembrane segment spans residues 882–902 (PELIFDITKILLAILGPLMVL). One can recognise a Peptidase C18 domain in the interval 903–1026 (QAGLTRIPYF…SLEGRGWRLL (124 aa)). Topologically, residues 903-1657 (QAGLTRIPYF…CMSADLEVVT (755 aa)) are cytoplasmic. The protease NS2-3 stretch occupies residues 904 to 1206 (AGLTRIPYFV…PVESMETTMR (303 aa)). Cysteine 922 carries S-palmitoyl cysteine; by host lipidation. The interval 929 to 949 (AGGHYVQMALMKLAALTGTYV) is interaction with host SCPS1. Residues histidine 952, glutamate 972, and cysteine 993 each act as for protease NS2 activity; shared with dimeric partner in the active site. The 182-residue stretch at 1027–1208 (APITAYAQQT…ESMETTMRSP (182 aa)) folds into the Peptidase S29 domain. Residues histidine 1083 and aspartate 1107 each act as charge relay system; for serine protease NS3 activity in the active site. Zn(2+)-binding residues include cysteine 1123 and cysteine 1125. Serine 1165 (charge relay system; for serine protease NS3 activity) is an active-site residue. Zn(2+) is bound by residues cysteine 1171 and histidine 1175. Positions 1217–1369 (PAVPQAFQVA…PNIEEIALSN (153 aa)) constitute a Helicase ATP-binding domain. Residue 1230 to 1237 (APTGSGKS) coordinates ATP. Positions 1237 and 1317 each coordinate Mg(2+). Residues 1316 to 1319 (DECH) carry the DECH box motif. Positions 1486-1497 (QRRGRTSRGRRG) are RNA-binding. Residues 1658-1678 (STWVLVGGVLAALAAYCLTTG) traverse the membrane as a helical segment. The NS3-binding stretch occupies residues 1679-1690 (SVVIVGRIILSG). Residues 1679 to 1805 (SVVIVGRIIL…SITSPLTTQS (127 aa)) lie on the Cytoplasmic side of the membrane. The chain crosses the membrane as a helical span at residues 1806–1824 (TLLFNILGGWVAAQLAPPG). Over 1825-1828 (AASA) the chain is Lumenal. The helical transmembrane segment at 1829 to 1849 (FVGAGIAGAAVGSIGLGKVLV) threads the bilayer. Aspartate 1850 is a topological domain (cytoplasmic). A helical membrane pass occupies residues 1851 to 1871 (MVAGYGAGVAGALVAFKVMSG). Residues 1872–1881 (EMPSTEDLVN) are Lumenal-facing. The helical transmembrane segment at 1882 to 1902 (LLPAILSPGALVVGVVCAAIL) threads the bilayer. At 1903–1972 (RRHVDPGEGA…WINEDCSTPC (70 aa)) the chain is on the cytoplasmic side. Residues cysteine 1968 and cysteine 1972 are each lipidated (S-palmitoyl cysteine; by host). An intramembrane segment occupies 1973 to 2002 (SGSWLRDVWDWICTVLADFKTWLQSKLLPR). Topologically, residues 2003-2989 (LPGVPFFSCQ…YHSLSRARPR (987 aa)) are cytoplasmic. Positions 2011, 2029, 2031, and 2052 each coordinate Zn(2+). An FKBP8-binding region spans residues 2120 to 2208 (EFFTEVDGVR…ASSSASQLSA (89 aa)). Positions 2120–2332 (EFFTEVDGVR…PIPPPRRKRT (213 aa)) are transcriptional activation. The segment at 2135–2139 (PACKP) is interaction with non-structural protein 4A. Residues 2189-2441 (RLARGSPPSL…PCAAEESKLP (253 aa)) are interaction with host SKP2. Serine 2194 is modified (phosphoserine; by host; in p56). A phosphoserine; by host; in p58 mark is found at serine 2197, serine 2201, serine 2204, serine 2207, and serine 2210. Residues 2210–2249 (SLKAACTTRHTPPDADLIEANLLWRQEMGGNITRVESENK) form an ISDR region. Positions 2210 to 2275 (SLKAACTTRH…REVSVPAEIL (66 aa)) are interaction with EIF2AK2/PKR. Residues 2249–2306 (KVVILDSFDPLRAEEDEREVSVPAEILRKSRKFPPALPVWARPDYNPPLLEPWKDPDY) form an NS4B-binding region. Residues 2322–2325 (PPIP) carry the SH3-binding motif. The Nuclear localization signal motif lies at 2326–2334 (PPRRKRTVV). Lysine 2350 participates in a covalent cross-link: Glycyl lysine isopeptide (Lys-Gly) (interchain with G-Cter in ubiquitin). The span at 2351-2367 (TFGSSESSAAGSGTATA) shows a compositional bias: low complexity. Positions 2351–2409 (TFGSSESSAAGSGTATAPPDQPSDDGDAGSDVESCSSMPPLEGEPGDPDLSDGSWSTVS) are disordered. The segment at 2354–2377 (SSESSAAGSGTATAPPDQPSDDGD) is V3. 2 positions are modified to phosphoserine; by host: serine 2448 and serine 2461. One can recognise a RdRp catalytic domain in the interval 2633–2751 (PMGFSYDTRC…ICESAGTQED (119 aa)). Mg(2+) is bound by residues aspartate 2639, aspartate 2737, and aspartate 2738. A helical membrane pass occupies residues 2990–3010 (WFMLCLLLLSVGVGIYLLPNR).

The protein belongs to the hepacivirus polyprotein family. Homooligomer. Interacts with E1 (via C-terminus). Interacts with the non-structural protein 5A. Interacts (via N-terminus) with host STAT1 (via SH2 domain); this interaction results in decreased STAT1 phosphorylation and ubiquitin-mediated proteasome-dependent STAT1 degradation, leading to decreased IFN-stimulated gene transcription. Interacts with host STAT3; this interaction constitutively activates STAT3. Interacts with host LTBR receptor. Interacts with host TNFRSF1A receptor and possibly induces apoptosis. Interacts with host HNRPK. Interacts with host YWHAE. Interacts with host UBE3A/E6AP. Interacts with host DDX3X. Interacts with host APOA2. Interacts with host RXRA protein. Interacts with host SP110 isoform 3/Sp110b; this interaction sequesters the transcriptional corepressor SP110 away from the nucleus. Interacts with host CREB3 nuclear transcription protein; this interaction triggers cell transformation. Interacts with host ACY3. Interacts with host C1QR1. Interacts with host RBM24; this interaction, which enhances the interaction of the mature core protein with 5'-UTR, may inhibit viral translation and favor replication. Interacts with host EIF2AK2/PKR; this interaction induces the autophosphorylation of EIF2AK2. Part of the viral assembly initiation complex composed of NS2, E1, E2, NS3, NS4A, NS5A and the mature core protein. In terms of assembly, forms a heterodimer with envelope glycoprotein E2. Interacts with mature core protein. Interacts with protease NS2. The heterodimer E1/E2 interacts with host CLDN1; this interaction plays a role in viral entry into host cell. Interacts with host SPSB2 (via C-terminus). Part of the viral assembly initiation complex composed of NS2, E1, E2, NS3, NS4A, NS5A and the mature core protein. Interacts with host NEURL3; this interaction prevents E1 binding to glycoprotein E2. As to quaternary structure, forms a heterodimer with envelope glycoprotein E1. Interacts with host CD81 and SCARB1 receptors; these interactions play a role in viral entry into host cell. Interacts with host EIF2AK2/PKR; this interaction inhibits EIF2AK2 and probably allows the virus to evade the innate immune response. Interacts with host CD209/DC-SIGN and CLEC4M/DC-SIGNR. Interact with host SPCS1; this interaction is essential for viral particle assembly. Interacts with protease NS2. The heterodimer E1/E2 interacts with host CLDN1; this interaction plays a role in viral entry into host cell. Part of the viral assembly initiation complex composed of NS2, E1, E2, NS3, NS4A, NS5A and the mature core protein. Interacts with host SLC3A2/4F2hc; the interaction may facilitate viral entry into host cell. Interacts with human PLSCR1. Homohexamer. Homoheptamer. Interacts with protease NS2. In terms of assembly, homodimer. Interacts with host SPCS1; this interaction is essential for viral particle assembly. Interacts with envelope glycoprotein E1. Interacts with envelope glycoprotein E2. Interacts with viroporin p7. Interacts with serine protease/helicase NS3. Part of the replication complex composed of NS2, NS3, NS4A, NS4B, NS5A and the RNA-directed RNA polymerase embedded in an ER-derived membranous web. Part of the viral assembly initiation complex composed of NS2, E1, E2, NS3, NS4A, NS5A and the mature core protein. As to quaternary structure, interacts with protease NS2. Interacts with non-structural protein 4A; this interaction stabilizes the folding of NS3 serine protease. NS3-NS4A interaction is essential for NS3 activation and allows membrane anchorage of the latter. NS3/NS4A complex also prevents phosphorylation of host IRF3, thus preventing the establishment of dsRNA induced antiviral state. Interacts with host MAVS; this interaction leads to the cleavage and inhibition of host MAVS. Interacts with host TICAM1; this interaction leads to the cleavage and inhibition of host TICAM1. Interacts with host TANK-binding kinase/TBK1; this interaction results in the inhibition of the association between TBK1 and IRF3, which leads to the inhibition of IRF3 activation. Interacts with host RBM24. Part of the replication complex composed of NS2, NS3, NS4A, NS4B, NS5A and the RNA-directed RNA polymerase embedded in an ER-derived membranous web. Part of the viral assembly initiation complex composed of NS2, E1, E2, NS3, NS4A, NS5A and the mature core protein. Interacts with NS3 serine protease; this interaction stabilizes the folding of NS3 serine protease. NS3-NS4A interaction is essential for NS3 activation and allows membrane anchorage of the latter. Interacts with non-structural protein 5A (via N-terminus). Part of the replication complex composed of NS2, NS3, NS4A, NS4B, NS5A and the RNA-directed RNA polymerase embedded in an ER-derived membranous web. Part of the viral assembly initiation complex composed of NS2, E1, E2, NS3, NS4A, NS5A and the mature core protein. In terms of assembly, homomultimer. Interacts with non-structural protein NS5A. Interacts with host PLA2G4C; this interaction likely initiates the recruitment of replication complexes to lipid droplets. Interacts with host STING; this interaction disrupts the interaction between STING and TBK1 thereby suppressing the interferon signaling. Part of the replication complex composed of NS2, NS3, NS4A, NS4B, NS5A and the RNA-directed RNA polymerase embedded in an ER-derived membranous web. As to quaternary structure, monomer. Homodimer; dimerization is required for RNA-binding. Interacts with the mature core protein. Interacts (via N-terminus) with non-structural protein 4A. Interacts with non-structural protein 4B. Interacts (via region D2) with RNA-directed RNA polymerase. Part of the viral assembly initiation complex composed of NS2, E1, E2, NS3, NS4A, NS5A and the mature core protein. Part of the replication complex composed of NS2, NS3, NS4A, NS4B, NS5A and the RNA-directed RNA polymerase embedded in an ER-derived membranous web. Interacts with host GRB2. Interacts with host BIN1. Interacts with host PIK3R1. Interacts with host SRCAP. Interacts with host FKBP8. Interacts (via C-terminus) with host VAPB (via MSP domain). Interacts with host EIF2AK2/PKR; this interaction leads to disruption of EIF2AK2 dimerization by NS5A and probably allows the virus to evade the innate immune response. Interacts (via N-terminus) with host PACSIN2 (via N-terminus); this interaction attenuates protein kinase C alpha-mediated phosphorylation of PACSIN2 by disrupting the interaction between PACSIN2 and PRKCA. Interacts (via N-terminus) with host SRC kinase (via SH2 domain). Interacts with most Src-family kinases. Interacts with host IFI27 and SKP2; promotes the ubiquitin-mediated proteasomal degradation of NS5A. Interacts with host GPS2. Interacts with host TNFRSF21; this interaction allows the modulation by the virus of JNK, p38 MAPK, STAT3, and Akt signaling pathways in a DR6-dependent manner. Interacts (via N-terminus) with host CIDEB (via N-terminus); this interaction seems to regulate the association of HCV particles with APOE. Interacts with host CHKA/Choline Kinase-alpha; CHKA bridges host PI4KA and NS5A and potentiates NS5A-stimulated PI4KA activity, which then facilitates the targeting of the ternary complex to the ER for viral replication. Interacts with host SPSB2 (via C-terminus); this interaction targets NS5A for ubiquitination and degradation. Interacts with host RAB18; this interaction may promote the association of NS5A and other replicase components with lipid droplets. Interacts (via region D2) with host PPIA/CYPA; the interaction stimulates RNA-binding ability of NS5A and is dependent on the peptidyl-prolyl cis-trans isomerase activity of PPIA/CYPA. Interacts with host TRIM14; this interaction induces the degradation of NS5A. Homooligomer. Interacts with non-structural protein 5A. Interacts with host VAPB. Interacts with host PRK2/PKN2. Interacts with host HNRNPA1 and SEPT6; these interactions facilitate viral replication. Part of the replication complex composed of NS2, NS3, NS4A, NS4B, NS5A and the RNA-directed RNA polymerase. The cofactor is Zn(2+). Mg(2+) serves as cofactor. In terms of processing, specific enzymatic cleavages in vivo yield mature proteins. The structural proteins, core, E1, E2 and p7 are produced by proteolytic processing by host signal peptidases. The core protein precursor is synthesized as a 23 kDa, which is retained in the ER membrane through the hydrophobic signal peptide. Cleavage by the signal peptidase releases the 21 kDa mature core protein. The cleavage of the core protein precursor occurs between aminoacids 176 and 188 but the exact cleavage site is not known. Some degraded forms of the core protein appear as well during the course of infection. The other proteins (p7, NS2, NS3, NS4A, NS4B, NS5A and NS5B) are cleaved by the viral proteases. Autoprocessing between NS2 and NS3 is mediated by the NS2 cysteine protease catalytic domain and regulated by the NS3 N-terminal domain. Phosphorylated by host PKC and PKA. Post-translationally, ubiquitinated; mediated by UBE3A and leading to core protein subsequent proteasomal degradation. In terms of processing, highly N-glycosylated. Palmitoylation is required for NS2/3 autoprocessing and E2 recruitment to membranes. Post-translationally, palmitoylated. This modification may play a role in its polymerization or in protein-protein interactions. In terms of processing, phosphorylated on serines in a basal form termed p56. p58 is a hyperphosphorylated form of p56. p56 and p58 coexist in the cell in roughly equivalent amounts. Hyperphosphorylation is dependent on the presence of NS4A. Host CSNK1A1/CKI-alpha or RPS6KB1 kinases may be responsible for NS5A phosphorylation. Tyrosine phosphorylation is essential for the interaction with host SRC. Post-translationally, the N-terminus is phosphorylated by host PRK2/PKN2. In terms of processing, ubiquitinated. Ubiquitination, most probably at Lys-2350, mediated by host IFI27 and SKP2 leads to proteasomal degradation, restricting viral infection. Ubiquitination by host TRIM22 leads to interruption of viral replication.

Its subcellular location is the host endoplasmic reticulum membrane. The protein resides in the host mitochondrion membrane. The protein localises to the virion. It localises to the host cytoplasm. It is found in the host nucleus. Its subcellular location is the host lipid droplet. The protein resides in the virion membrane. The protein localises to the host mitochondrion. It localises to the host cell membrane. It is found in the host perinuclear region. It carries out the reaction Hydrolysis of four peptide bonds in the viral precursor polyprotein, commonly with Asp or Glu in the P6 position, Cys or Thr in P1 and Ser or Ala in P1'.. It catalyses the reaction a ribonucleoside 5'-triphosphate + H2O = a ribonucleoside 5'-diphosphate + phosphate + H(+). The enzyme catalyses ATP + H2O = ADP + phosphate + H(+). The catalysed reaction is RNA(n) + a ribonucleoside 5'-triphosphate = RNA(n+1) + diphosphate. Its activity is regulated as follows. Inhibited by the antiviral drug hexamethylene amiloride. Inhibition by amantadine appears to be genotype-dependent. Also inhibited by long-alkyl-chain iminosugar derivatives. With respect to regulation, activity is up-regulated by PRK2/PKN2-mediated phosphorylation. In terms of biological role, packages viral RNA to form a viral nucleocapsid, and promotes virion budding. Participates in the viral particle production as a result of its interaction with the non-structural protein 5A. Binds RNA and may function as a RNA chaperone to induce the RNA structural rearrangements taking place during virus replication. Modulates viral translation initiation by interacting with viral IRES and 40S ribosomal subunit. Affects various cell signaling pathways, host immunity and lipid metabolism. Prevents the establishment of cellular antiviral state by blocking the interferon-alpha/beta (IFN-alpha/beta) and IFN-gamma signaling pathways and by blocking the formation of phosphorylated STAT1 and promoting ubiquitin-mediated proteasome-dependent degradation of STAT1. Activates STAT3 leading to cellular transformation. Regulates the activity of cellular genes, including c-myc and c-fos. May repress the promoter of p53, and sequester CREB3 and SP110 isoform 3/Sp110b in the cytoplasm. Represses cell cycle negative regulating factor CDKN1A, thereby interrupting an important check point of normal cell cycle regulation. Targets transcription factors involved in the regulation of inflammatory responses and in the immune response: suppresses TNF-induced NF-kappa-B activation, and activates AP-1. Binds to dendritic cells (DCs) via C1QR1, resulting in down-regulation of T-lymphocytes proliferation. Alters lipid metabolism by interacting with hepatocellular proteins involved in lipid accumulation and storage. Induces up-regulation of FAS promoter activity, and thereby contributes to the increased triglyceride accumulation in hepatocytes (steatosis). Its function is as follows. Forms a heterodimer with envelope glycoprotein E2, which mediates virus attachment to the host cell, virion internalization through clathrin-dependent endocytosis and fusion with host membrane. Fusion with the host cell is most likely mediated by both E1 and E2, through conformational rearrangements of the heterodimer required for fusion rather than a classical class II fusion mechanism. E1/E2 heterodimer binds host apolipoproteins such as APOB and ApoE thereby forming a lipo-viro-particle (LVP). APOE associated to the LVP allows the initial virus attachment to cell surface receptors such as the heparan sulfate proteoglycans (HSPGs), syndecan-1 (SDC1), syndecan-1 (SDC2), the low-density lipoprotein receptor (LDLR) and scavenger receptor class B type I (SCARB1). The cholesterol transfer activity of SCARB1 allows E2 exposure and binding of E2 to SCARB1 and the tetraspanin CD81. E1/E2 heterodimer binding on CD81 activates the epithelial growth factor receptor (EGFR) signaling pathway. Diffusion of the complex E1-E2-EGFR-SCARB1-CD81 to the cell lateral membrane allows further interaction with Claudin 1 (CLDN1) and occludin (OCLN) to finally trigger HCV entry. Functionally, forms a heterodimer with envelope glycoprotein E1, which mediates virus attachment to the host cell, virion internalization through clathrin-dependent endocytosis and fusion with host membrane. Fusion with the host cell is most likely mediated by both E1 and E2, through conformational rearrangements of the heterodimer required for fusion rather than a classical class II fusion mechanism. The interaction between envelope glycoprotein E2 and host apolipoprotein E/APOE allows the proper assembly, maturation and infectivity of the viral particles. This interaction is probably promoted via the up-regulation of cellular autophagy by the virus. E1/E2 heterodimer binds host apolipoproteins such as APOB and APOE thereby forming a lipo-viro-particle (LVP). APOE associated to the LVP allows the initial virus attachment to cell surface receptors such as the heparan sulfate proteoglycans (HSPGs), syndecan-1 (SDC1), syndecan-1 (SDC2), the low-density lipoprotein receptor (LDLR) and scavenger receptor class B type I (SCARB1). The cholesterol transfer activity of SCARB1 allows E2 exposure and binding of E2 to SCARB1 and the tetraspanin CD81. E1/E2 heterodimer binding on CD81 activates the epithelial growth factor receptor (EGFR) signaling pathway. Diffusion of the complex E1-E2-EGFR-SCARB1-CD81 to the cell lateral membrane allows further interaction with Claudin 1 (CLDN1) and occludin (OCLN) to finally trigger HCV entry. Inhibits host EIF2AK2/PKR activation, preventing the establishment of an antiviral state. Viral ligand for CD209/DC-SIGN and CLEC4M/DC-SIGNR, which are respectively found on dendritic cells (DCs), and on liver sinusoidal endothelial cells and macrophage-like cells of lymph node sinuses. These interactions allow the capture of circulating HCV particles by these cells and subsequent facilitated transmission to permissive cells such as hepatocytes and lymphocyte subpopulations. The interaction between E2 and host amino acid transporter complex formed by SLC3A2 and SLC7A5/LAT1 may facilitate viral entry into host cell. Ion channel protein that acts as a viroporin and plays an essential role in the assembly, envelopment and secretion of viral particles. Regulates the host cell secretory pathway, which induces the intracellular retention of viral glycoproteins and favors assembly of viral particles. Creates a pore in acidic organelles and releases Ca(2+) and H(+) in the cytoplasm of infected cells, leading to a productive viral infection. High levels of cytoplasmic Ca(2+) may trigger membrane trafficking and transport of viral ER-associated proteins to viroplasms, sites of viral genome replication. This ionic imbalance induces the assembly of the inflammasome complex, which triggers the maturation of pro-IL-1beta into IL-1beta through the action of caspase-1. Targets also host mitochondria and induces mitochondrial depolarization. In addition of its role as a viroporin, acts as a lipid raft adhesion factor. In terms of biological role, cysteine protease required for the proteolytic auto-cleavage between the non-structural proteins NS2 and NS3. The N-terminus of NS3 is required for the function of NS2 protease (active region NS2-3). Promotes the initiation of viral particle assembly by mediating the interaction between structural and non-structural proteins. Its function is as follows. Displays three enzymatic activities: serine protease with a chymotrypsin-like fold, NTPase and RNA helicase. NS3 serine protease, in association with NS4A, is responsible for the cleavages of NS3-NS4A, NS4A-NS4B, NS4B-NS5A and NS5A-NS5B. The NS3/NS4A complex prevents phosphorylation of host IRF3, thus preventing the establishment of dsRNA induced antiviral state. The NS3/NS4A complex induces host amino acid transporter component SLC3A2, thus contributing to HCV propagation. NS3 RNA helicase binds to RNA and unwinds both dsDNA and dsRNA in the 3' to 5' direction, and likely resolves RNA complicated stable secondary structures in the template strand. Binds a single ATP and catalyzes the unzipping of a single base pair of dsRNA. Inhibits host antiviral proteins TBK1 and IRF3 thereby preventing the establishment of an antiviral state. Cleaves host MAVS/CARDIF thereby preventing the establishment of an antiviral state. Cleaves host TICAM1/TRIF, thereby disrupting TLR3 signaling and preventing the establishment of an antiviral state. Functionally, peptide cofactor which forms a non-covalent complex with the N-terminal of NS3 serine protease. The NS3/NS4A complex prevents phosphorylation of host IRF3, thus preventing the establishment of dsRNA induced antiviral state. The NS3/NS4A complex induces host amino acid transporter component SLC3A2, thus contributing to HCV propagation. Induces a specific membrane alteration that serves as a scaffold for the virus replication complex. This membrane alteration gives rise to the so-called ER-derived membranous web that contains the replication complex. NS4B self-interaction contributes to its function in membranous web formation. Promotes host TRIF protein degradation in a CASP8-dependent manner thereby inhibiting host TLR3-mediated interferon signaling. Disrupts the interaction between STING and TBK1 contributing to the inhibition of interferon signaling. In terms of biological role, phosphorylated protein that is indispensable for viral replication and assembly. Both hypo- and hyperphosphorylated states are required for the viral life cycle. The hyperphosphorylated form of NS5A is an inhibitor of viral replication. Involved in RNA-binding and especially in binding to the viral genome. Zinc is essential for RNA-binding. Participates in the viral particle production as a result of its interaction with the mature viral core protein. Its interaction with host VAPB may target the viral replication complex to vesicles. Down-regulates viral IRES translation initiation. Mediates interferon resistance, presumably by interacting with and inhibiting host EIF2AK2/PKR. Prevents BIN1-induced apoptosis. Acts as a transcriptional activator of some host genes important for viral replication when localized in the nucleus. Via the interaction with host PACSIN2, modulates lipid droplet formation in order to promote virion assembly. Modulates TNFRSF21/DR6 signaling pathway for viral propagation. Its function is as follows. RNA-dependent RNA polymerase that performs primer-template recognition and RNA synthesis during viral replication. Initiates RNA transcription/replication at a flavin adenine dinucleotide (FAD), resulting in a 5'- FAD cap on viral RNAs. In this way, recognition of viral 5' RNA by host pattern recognition receptors can be bypassed, thereby evading activation of antiviral pathways. This Hepatitis C virus genotype 1b (isolate Taiwan) (HCV) protein is Genome polyprotein.